Reading from the N-terminus, the 717-residue chain is Polyribonucleotide nucleotidyltransferase (717 aa).

The Mg(2+) site is built by Asp487 and Asp493. The KH domain occupies Pro554 to Ile613. The S1 motif domain maps to Gly623–Arg691.

The protein belongs to the polyribonucleotide nucleotidyltransferase family. The cofactor is Mg(2+).

The protein resides in the cytoplasm. It catalyses the reaction RNA(n+1) + phosphate = RNA(n) + a ribonucleoside 5'-diphosphate. Its function is as follows. Involved in mRNA degradation. Catalyzes the phosphorolysis of single-stranded polyribonucleotides processively in the 3'- to 5'-direction. This chain is Polyribonucleotide nucleotidyltransferase, found in Acidiphilium cryptum (strain JF-5).